The following is a 398-amino-acid chain: 1-deoxy-D-xylulose 5-phosphate reductoisomerase (398 aa).

NADPH is bound by residues Thr-10, Gly-11, Ser-12, Ile-13, Gly-36, Arg-37, Asn-38, and Asn-124. 1-deoxy-D-xylulose 5-phosphate is bound at residue Lys-125. Glu-126 is a binding site for NADPH. Mn(2+) is bound at residue Asp-150. Ser-151, Glu-152, Ser-186, and His-209 together coordinate 1-deoxy-D-xylulose 5-phosphate. A Mn(2+)-binding site is contributed by Glu-152. Gly-215 lines the NADPH pocket. The 1-deoxy-D-xylulose 5-phosphate site is built by Ser-222, Asn-227, Lys-228, and Glu-231. Glu-231 contacts Mn(2+).

The protein belongs to the DXR family. In terms of assembly, homodimer. The cofactor is Mg(2+). Mn(2+) is required as a cofactor.

It catalyses the reaction 2-C-methyl-D-erythritol 4-phosphate + NADP(+) = 1-deoxy-D-xylulose 5-phosphate + NADPH + H(+). It participates in isoprenoid biosynthesis; isopentenyl diphosphate biosynthesis via DXP pathway; isopentenyl diphosphate from 1-deoxy-D-xylulose 5-phosphate: step 1/6. Catalyzes the NADPH-dependent rearrangement and reduction of 1-deoxy-D-xylulose-5-phosphate (DXP) to 2-C-methyl-D-erythritol 4-phosphate (MEP). The sequence is that of 1-deoxy-D-xylulose 5-phosphate reductoisomerase from Yersinia enterocolitica serotype O:8 / biotype 1B (strain NCTC 13174 / 8081).